A 587-amino-acid chain; its full sequence is Pectinesterase 2 (587 aa).

Positions 1 to 40 (MAPIKEFISKFSDFKNNKKLILSSAAIALLLLASIVGIAA) are cleaved as a signal peptide. Residues Asn-99 and Asn-218 are each glycosylated (N-linked (GlcNAc...) asparagine). Substrate is bound by residues Thr-351 and Gln-381. Asp-404 (proton donor) is an active-site residue. Cys-418 and Cys-438 are disulfide-bonded. Asp-425 acts as the Nucleophile in catalysis. Substrate-binding residues include Arg-493 and Trp-495.

In the N-terminal section; belongs to the PMEI family. This sequence in the C-terminal section; belongs to the pectinesterase family. Expressed in flower buds.

Its subcellular location is the secreted. The protein resides in the cell wall. The catalysed reaction is [(1-&gt;4)-alpha-D-galacturonosyl methyl ester](n) + n H2O = [(1-&gt;4)-alpha-D-galacturonosyl](n) + n methanol + n H(+). It functions in the pathway glycan metabolism; pectin degradation; 2-dehydro-3-deoxy-D-gluconate from pectin: step 1/5. Acts in the modification of cell walls via demethylesterification of cell wall pectin. This Arabidopsis thaliana (Mouse-ear cress) protein is Pectinesterase 2 (PME2).